We begin with the raw amino-acid sequence, 468 residues long: Trehalose-2-sulfate acyltransferase PapA2 (468 aa).

It belongs to the PapA acyltransferase family.

The enzyme catalyses 2-O-sulfo-alpha,alpha-trehalose + hexadecanoyl-CoA = 2-O-sulfo-2'-O-hexadecanoyl-alpha,alpha-trehalose + CoA. Its function is as follows. Required for the biosynthesis of sulfolipid-1 (SL-1), a major mycobacterial cell wall lipid. Catalyzes the acylation of trehalose-2-sulfate by adding the palmitoyl group at the 2'-position to yield the intermediate trehalose-2-sulfate-2'-palmitate (SL659). The polypeptide is Trehalose-2-sulfate acyltransferase PapA2 (papA2) (Mycobacterium bovis (strain ATCC BAA-935 / AF2122/97)).